Consider the following 125-residue polypeptide: Small ribosomal subunit protein uS13 (125 aa).

The tract at residues 92–125 (RRSLPVRGQRTQTNARTRKGKRKTVAGKKKATKK) is disordered. Positions 107–125 (RTRKGKRKTVAGKKKATKK) are enriched in basic residues.

The protein belongs to the universal ribosomal protein uS13 family. In terms of assembly, part of the 30S ribosomal subunit. Forms a loose heterodimer with protein S19. Forms two bridges to the 50S subunit in the 70S ribosome.

Functionally, located at the top of the head of the 30S subunit, it contacts several helices of the 16S rRNA. In the 70S ribosome it contacts the 23S rRNA (bridge B1a) and protein L5 of the 50S subunit (bridge B1b), connecting the 2 subunits; these bridges are implicated in subunit movement. Contacts the tRNAs in the A and P-sites. The chain is Small ribosomal subunit protein uS13 from Chlorobium phaeobacteroides (strain DSM 266 / SMG 266 / 2430).